A 359-amino-acid polypeptide reads, in one-letter code: Peroxisome assembly protein 12 (359 aa).

Topologically, residues 1–19 (MAEYGAHITTASVADDQPS) are peroxisomal matrix. Residues 20–47 (IFEVVAQDSLMTAVRPALQHVVKVLAES) form a helical membrane-spanning segment. The Cytoplasmic portion of the chain corresponds to 48–51 (NPAH). The helical transmembrane segment at 52-76 (YGFLWRWFDEIFTLLDFLLQQHYLS) threads the bilayer. Residues 77–109 (RTSASFSEHFYGLKRIVAGSSPHLQRPASAGLP) are Peroxisomal matrix-facing. Residues 110 to 139 (KEHLWKSAMFLVLLPYLKVKLEKLASSLRE) traverse the membrane as a helical segment. Residues 140 to 144 (EDEYS) lie on the Cytoplasmic side of the membrane. Residues 145 to 183 (IHPPSSRWKRFYRAFLAAYPFVNMAWEGWFLTQQLRYIL) traverse the membrane as a helical segment. At 184-249 (GKAEHHSPLL…VGGVALSLST (66 aa)) the chain is on the peroxisomal matrix side. Residues 250 to 277 (GLSVGVFFLQFLDWWYSSENQEAIKSLT) form a helical membrane-spanning segment. Residues 278 to 359 (ALPTPPPPVH…HLIKLYSPEN (82 aa)) lie on the Cytoplasmic side of the membrane. 4 residues coordinate Zn(2+): Cys304, Cys307, Cys325, and Cys328. The RING-type; degenerate zinc finger occupies 304 to 343 (CPLCRKTRVNDTVLATSGYVFCYRCVFNYVRSHQACPITG).

This sequence belongs to the pex2/pex10/pex12 family. In terms of assembly, component of the PEX2-PEX10-PEX12 retrotranslocation channel, composed of PEX2, PEX10 and PEX12. Interacts with PEX19 via its cytoplasmic domain.

The protein resides in the peroxisome membrane. It functions in the pathway protein modification; protein ubiquitination. Functionally, component of a retrotranslocation channel required for peroxisome organization by mediating export of the PEX5 receptor from peroxisomes to the cytosol, thereby promoting PEX5 recycling. The retrotranslocation channel is composed of PEX2, PEX10 and PEX12; each subunit contributing transmembrane segments that coassemble into an open channel that specifically allows the passage of PEX5 through the peroxisomal membrane. PEX12 also regulates PEX5 recycling by activating the E3 ubiquitin-protein ligase activity of PEX10. When PEX5 recycling is compromised, PEX12 stimulates PEX10-mediated polyubiquitination of PEX5, leading to its subsequent degradation. In Mus musculus (Mouse), this protein is Peroxisome assembly protein 12 (Pex12).